Consider the following 20-residue polypeptide: XVGDLKTPAILRVTNAYLFN.

This sequence belongs to the EF-1-beta/EF-1-delta family. Phosphorylated. Uterus and embryo.

The protein resides in the cytoplasm. It is found in the nucleus. Functionally, binds DNA. The polypeptide is Implantin (Mus musculus (Mouse)).